A 296-amino-acid chain; its full sequence is Ribosomal RNA small subunit methyltransferase A (296 aa).

Asn-30, Leu-32, Gly-57, Glu-78, Asp-103, and Asn-128 together coordinate S-adenosyl-L-methionine.

It belongs to the class I-like SAM-binding methyltransferase superfamily. rRNA adenine N(6)-methyltransferase family. RsmA subfamily.

Its subcellular location is the cytoplasm. The catalysed reaction is adenosine(1518)/adenosine(1519) in 16S rRNA + 4 S-adenosyl-L-methionine = N(6)-dimethyladenosine(1518)/N(6)-dimethyladenosine(1519) in 16S rRNA + 4 S-adenosyl-L-homocysteine + 4 H(+). Its function is as follows. Specifically dimethylates two adjacent adenosines (A1518 and A1519) in the loop of a conserved hairpin near the 3'-end of 16S rRNA in the 30S particle. May play a critical role in biogenesis of 30S subunits. The polypeptide is Ribosomal RNA small subunit methyltransferase A (Staphylococcus epidermidis (strain ATCC 35984 / DSM 28319 / BCRC 17069 / CCUG 31568 / BM 3577 / RP62A)).